A 460-amino-acid chain; its full sequence is MSTKMTPPVEKNEFIDVVFEDLTHDGAGVAKVKGYPIFVKNGLPGEEAQIKIIKVKKNFAFGRLMKLHTESPYRKDAECPVYNQCGGCQLQHLTYEGQLQAKEKQVRDVMQRIGGLSDVPVHPVLGMKNPWVYRNKAQVPIGEREGGLVAGFYRQGTHDIINMESCLIQAEENDTLIQEVKRICEKHGISAYNEERNKGTLRHVMARYGQVTGEIMLVFITRTAELPNKKAIIEEIATKFPEVKSIVQNVNPKRTNVIFGDKTTVLYGSEYIYDFIGDIKFAISARSFYQVNPEQTKVLYDKTLEYAKLDGNETVIDAYCGIGSISLFLAQKAKKVYGVEIVPEAIEDAKRNAALNNMTNAEFGVGEAEVVIPKWYKEGVIADTMVVDPPRKGCDEALLNTIIDMKPKRVVYVSCNPATLARDLKVLEEGGYKTQEVQPVDMFPHTTHVECVVLMSRVEK.

The 59-residue stretch at P8–K66 folds into the TRAM domain. 4 residues coordinate [4Fe-4S] cluster: C79, C85, C88, and C166. Positions 290, 319, 340, and 388 each coordinate S-adenosyl-L-methionine. The active-site Nucleophile is C415.

Belongs to the class I-like SAM-binding methyltransferase superfamily. RNA M5U methyltransferase family.

This is an uncharacterized protein from Bacillus cereus (strain ATCC 10987 / NRS 248).